The primary structure comprises 432 residues: Glutamate-1-semialdehyde 2,1-aminomutase 1 (432 aa).

Residue lysine 268 is modified to N6-(pyridoxal phosphate)lysine.

This sequence belongs to the class-III pyridoxal-phosphate-dependent aminotransferase family. HemL subfamily. Homodimer. Requires pyridoxal 5'-phosphate as cofactor.

It localises to the cytoplasm. It catalyses the reaction (S)-4-amino-5-oxopentanoate = 5-aminolevulinate. It participates in porphyrin-containing compound metabolism; protoporphyrin-IX biosynthesis; 5-aminolevulinate from L-glutamyl-tRNA(Glu): step 2/2. The chain is Glutamate-1-semialdehyde 2,1-aminomutase 1 from Bacillus licheniformis (strain ATCC 14580 / DSM 13 / JCM 2505 / CCUG 7422 / NBRC 12200 / NCIMB 9375 / NCTC 10341 / NRRL NRS-1264 / Gibson 46).